Consider the following 592-residue polypeptide: Thiol:disulfide interchange protein DsbD (592 aa).

The N-terminal stretch at 1–19 (MKLIASFSIFMLMSIWSFA) is a signal peptide. 2 disulfide bridges follow: Cys130-Cys136 and Cys204-Cys326. 8 consecutive transmembrane segments (helical) span residues 186 to 206 (IWVL…PCVF), 229 to 249 (FVLS…LGLV), 265 to 285 (IILG…FGAW), 318 to 338 (ISGL…LLYI), 345 to 365 (LLGF…LILF), 379 to 399 (WMNI…LMFV), 406 to 426 (MATD…FYVM), and 440 to 460 (ALVI…TIFG). One can recognise a Thioredoxin domain in the interval 443 to 592 (IFIGLFASAM…AFAAHAKNIL (150 aa)). Cys508 and Cys511 are oxidised to a cystine.

This sequence belongs to the thioredoxin family. DsbD subfamily.

The protein localises to the cell inner membrane. It carries out the reaction [protein]-dithiol + NAD(+) = [protein]-disulfide + NADH + H(+). The enzyme catalyses [protein]-dithiol + NADP(+) = [protein]-disulfide + NADPH + H(+). Its function is as follows. Required to facilitate the formation of correct disulfide bonds in some periplasmic proteins and for the assembly of the periplasmic c-type cytochromes. Acts by transferring electrons from cytoplasmic thioredoxin to the periplasm. This transfer involves a cascade of disulfide bond formation and reduction steps. The chain is Thiol:disulfide interchange protein DsbD from Pseudoalteromonas atlantica (strain T6c / ATCC BAA-1087).